The chain runs to 432 residues: Heme-based aerotactic transducer HemAT (432 aa).

The Methyl-accepting transducer domain occupies 184–420; that stretch reads YNQTRDEQEE…EVSRAVSHVA (237 aa).

It belongs to the methyl-accepting chemotaxis (MCP) protein family. As to quaternary structure, homotetramer.

Functionally, heme-containing signal transducer responsible for aerotaxis, the migratory response toward or away from oxygen. The sequence is that of Heme-based aerotactic transducer HemAT (hemAT) from Bacillus subtilis (strain 168).